The following is a 161-amino-acid chain: Nucleotide-binding protein PSEEN4469 (161 aa).

Belongs to the YajQ family.

Functionally, nucleotide-binding protein. This Pseudomonas entomophila (strain L48) protein is Nucleotide-binding protein PSEEN4469.